We begin with the raw amino-acid sequence, 739 residues long: Copalyl diphosphate synthase 1 (739 aa).

Lysine 154 is a binding site for substrate. Residues aspartate 287 and aspartate 289 each coordinate Mg(2+). The DXDD motif motif lies at 287-290; sequence DADD. Lysine 373 lines the substrate pocket.

Belongs to the terpene synthase family. The cofactor is Mg(2+).

The enzyme catalyses (2E,6E,10E)-geranylgeranyl diphosphate = (+)-copalyl diphosphate. It functions in the pathway secondary metabolite biosynthesis; terpenoid biosynthesis. Monofunctional diterpene synthase converting geranylgeranyl diphosphate to copalyl diphosphate. This Selaginella moellendorffii (Spikemoss) protein is Copalyl diphosphate synthase 1 (CPS1).